The chain runs to 76 residues: Small proline-rich protein 2I (76 aa).

A run of 3 repeats spans residues 21 to 29, 30 to 38, and 39 to 47. The 3 X 9 AA approximate tandem repeats stretch occupies residues 21–47; that stretch reads KKCPEPCPPPQCPEPCPPPKCPEPCPE. The span at 40 to 53 shows a compositional bias: pro residues; sequence KCPEPCPESCPPPS. The disordered stretch occupies residues 40–76; the sequence is KCPEPCPESCPPPSYQQKCPPVQPPPPCQQKCPPKSK.

It belongs to the cornifin (SPRR) family. Not expressed in uterus.

It is found in the cytoplasm. Cross-linked envelope protein of keratinocytes. It is a keratinocyte protein that first appears in the cell cytosol, but ultimately becomes cross-linked to membrane proteins by transglutaminase. All that results in the formation of an insoluble envelope beneath the plasma membrane. The protein is Small proline-rich protein 2I (Sprr2i) of Mus musculus (Mouse).